Here is a 465-residue protein sequence, read N- to C-terminus: ATP synthase subunit beta (465 aa).

152–159 provides a ligand contact to ATP; it reads GGAGVGKT.

It belongs to the ATPase alpha/beta chains family. In terms of assembly, F-type ATPases have 2 components, CF(1) - the catalytic core - and CF(0) - the membrane proton channel. CF(1) has five subunits: alpha(3), beta(3), gamma(1), delta(1), epsilon(1). CF(0) has three main subunits: a(1), b(2) and c(9-12). The alpha and beta chains form an alternating ring which encloses part of the gamma chain. CF(1) is attached to CF(0) by a central stalk formed by the gamma and epsilon chains, while a peripheral stalk is formed by the delta and b chains.

The protein localises to the cell membrane. The enzyme catalyses ATP + H2O + 4 H(+)(in) = ADP + phosphate + 5 H(+)(out). Its function is as follows. Produces ATP from ADP in the presence of a proton gradient across the membrane. The catalytic sites are hosted primarily by the beta subunits. The protein is ATP synthase subunit beta of Desulfitobacterium hafniense (strain Y51).